We begin with the raw amino-acid sequence, 338 residues long: 2-oxoglutarate-dependent dioxygenase ecdG (338 aa).

The region spanning 165–273 is the Fe2OG dioxygenase domain; it reads PSVTNLGFLR…KYTLAYFVRP (109 aa). The Fe cation site is built by His-190, Asp-192, and His-249. Lys-264 serves as a coordination point for 2-oxoglutarate.

This sequence belongs to the iron/ascorbate-dependent oxidoreductase family. It depends on Fe(2+) as a cofactor.

The protein operates within antifungal biosynthesis. Its function is as follows. 2-oxoglutarate-dependent dioxygenase; part of the gene cluster that mediates the biosynthesis of echinocandin B, a fungal lipidated cyclic hexapeptide that acts as an antifungal agent. Linoleoyl-AMP, produced by the fatty-acyl-AMP ligase ecdI, is transferred to the initiation carrier domain (T0) of ecdA. The linoleoyl-S-phosphopantetheinyl-T0 is sequentially extended with L-ornithine, L-threonine, L-proline, L-homotyrosine, L-threonine, and 4R-methyl-L-proline to form the linear hexapeptide. Thereafter, the terminal condensation (C7) performs macrocyclization of the NRPS product and the cyclic scaffold is released from ecdA. All six of the amino acid residues are hydroxylated, including 4R,5R-dihydroxy-L-ornithine, 4R-hydroxyl-L-proline, 3S,4S-dihydroxy-L-homotyrosine, and 3S-hydroxyl-4S-methyl-L-prolin. In the pathway, all the hydroxylation reactions are proposed to occur following completion of the cyclic peptide, so the unhydroxylated precursor produced by ecdA will undergo six rounds of hydroxylation. Five hydroxylase genes (ecdG, ecdH, ecdK, htyE and htyF) are embedded within the echinocandin B (ecd) and L-homotyrosine (hty) clusters. The chain is 2-oxoglutarate-dependent dioxygenase ecdG from Aspergillus rugulosus (Emericella rugulosa).